A 274-amino-acid polypeptide reads, in one-letter code: Ribosomal RNA small subunit methyltransferase A (274 aa).

S-adenosyl-L-methionine-binding residues include Asn-17, Leu-19, Gly-44, Glu-65, Asp-89, and Asn-111.

It belongs to the class I-like SAM-binding methyltransferase superfamily. rRNA adenine N(6)-methyltransferase family. RsmA subfamily.

It localises to the cytoplasm. The enzyme catalyses adenosine(1518)/adenosine(1519) in 16S rRNA + 4 S-adenosyl-L-methionine = N(6)-dimethyladenosine(1518)/N(6)-dimethyladenosine(1519) in 16S rRNA + 4 S-adenosyl-L-homocysteine + 4 H(+). Functionally, specifically dimethylates two adjacent adenosines (A1518 and A1519) in the loop of a conserved hairpin near the 3'-end of 16S rRNA in the 30S particle. May play a critical role in biogenesis of 30S subunits. The chain is Ribosomal RNA small subunit methyltransferase A from Buchnera aphidicola subsp. Schizaphis graminum (strain Sg).